Consider the following 154-residue polypeptide: Large ribosomal subunit protein bL9c (154 aa).

The protein belongs to the bacterial ribosomal protein bL9 family.

Its subcellular location is the plastid. The protein localises to the chloroplast. Binds to the 23S rRNA. The protein is Large ribosomal subunit protein bL9c of Gracilaria tenuistipitata var. liui (Red alga).